Here is a 435-residue protein sequence, read N- to C-terminus: GTPase Der (435 aa).

2 EngA-type G domains span residues 3 to 167 and 176 to 351; these read NIVA…KDEG and PRIA…ENRG. Residues 9–16, 56–60, 119–122, 182–189, 229–233, and 294–297 each bind GTP; these read GRPNVGKS, DTGGY, NKSD, GRPNAGKS, DTAGI, and NKWD. Positions 352-435 constitute a KH-like domain; sequence KRIPTSELND…VPISIVYRKK (84 aa).

The protein belongs to the TRAFAC class TrmE-Era-EngA-EngB-Septin-like GTPase superfamily. EngA (Der) GTPase family. As to quaternary structure, associates with the 50S ribosomal subunit.

GTPase that plays an essential role in the late steps of ribosome biogenesis. The chain is GTPase Der from Cytophaga hutchinsonii (strain ATCC 33406 / DSM 1761 / CIP 103989 / NBRC 15051 / NCIMB 9469 / D465).